Here is a 250-residue protein sequence, read N- to C-terminus: Enoyl-[acyl-carrier-protein] reductase [NADPH] FabL (250 aa).

Residues 13 to 16, 36 to 38, 62 to 63, and Asn-89 each bind NADP(+); these read SRGV, ARS, and NV. Residues Tyr-151 and Lys-158 each act as proton acceptor in the active site. NADP(+) is bound by residues Lys-158 and 187-189; that span reads IDT.

Belongs to the short-chain dehydrogenases/reductases (SDR) family. Homotetramer.

It carries out the reaction a 2,3-saturated acyl-[ACP] + NADP(+) = a (2E)-enoyl-[ACP] + NADPH + H(+). The catalysed reaction is (2E)-butenoyl-[ACP] + NADPH + H(+) = butanoyl-[ACP] + NADP(+). The protein operates within lipid metabolism; fatty acid biosynthesis. Inhibited by triclosan. Catalyzes the reduction of a carbon-carbon double bond in an enoyl moiety that is covalently linked to an acyl carrier protein (ACP). It confers resistance to triclosan. The protein is Enoyl-[acyl-carrier-protein] reductase [NADPH] FabL (fabL) of Bacillus subtilis (strain 168).